The primary structure comprises 418 residues: Metal tolerance protein 1 (418 aa).

Residues 1 to 56 are Cytoplasmic-facing; the sequence is MDSHNSAPPQIAEVRMDISSSTSVAAGNKVCRGAACDFSDSSNSSKDARERMASMR. Residues 57–77 form a helical membrane-spanning segment; sequence KLIIAVILCIIFMAVEVVGGI. Topologically, residues 78 to 89 are vacuolar; that stretch reads KANSLAILTDAA. Residues 90-110 form a helical membrane-spanning segment; it reads HLLSDVAAFAISLFSLWAAGW. The Cytoplasmic portion of the chain corresponds to 111 to 122; the sequence is EATPQQSYGFFR. A helical membrane pass occupies residues 123-143; the sequence is IEILGALVSIQLIWLLAGILV. The Vacuolar portion of the chain corresponds to 144-160; it reads YEAIVRLINESGEVQGS. Residues 161 to 181 form a helical membrane-spanning segment; sequence LMFAVSAFGLFVNIIMAVLLG. The required for zinc-binding stretch occupies residues 182 to 246; that stretch reads HDHGHGHGHG…HHPGTGHHHH (65 aa). The Cytoplasmic segment spans residues 182-282; that stretch reads HDHGHGHGHG…RRNINVHSAY (101 aa). Residues 186-248 form a disordered region; sequence HGHGHGHGHG…PGTGHHHHDA (63 aa). The segment covering 196–227 has biased composition (basic and acidic residues); that stretch reads HSHDHDHGGSDHDHHHHEDQEHGHVHHHEDGH. Residues 235-245 show a composition bias toward basic residues; it reads LHHHPGTGHHH. The chain crosses the membrane as a helical span at residues 283–303; it reads LHVLGDSIQSIGVMIGGAIIW. The Vacuolar portion of the chain corresponds to 304–307; sequence YKPE. Residues 308–328 form a helical membrane-spanning segment; it reads WKIIDLICTLIFSVIVLFTTI. Over 329–418 the chain is Cytoplasmic; sequence KMLRNILEVL…SHVTIQIERE (90 aa).

This sequence belongs to the cation diffusion facilitator (CDF) transporter (TC 2.A.4) family. SLC30A subfamily.

It is found in the vacuole membrane. Functionally, involved in sequestration of excess zinc in the cytoplasm into vacuoles to maintain zinc homeostasis. The protein is Metal tolerance protein 1 (MTP1) of Oryza sativa subsp. japonica (Rice).